The primary structure comprises 357 residues: Nicotinate-nucleotide--dimethylbenzimidazole phosphoribosyltransferase (357 aa).

The Proton acceptor role is filled by E323.

This sequence belongs to the CobT family.

It catalyses the reaction 5,6-dimethylbenzimidazole + nicotinate beta-D-ribonucleotide = alpha-ribazole 5'-phosphate + nicotinate + H(+). Its pathway is nucleoside biosynthesis; alpha-ribazole biosynthesis; alpha-ribazole from 5,6-dimethylbenzimidazole: step 1/2. Functionally, catalyzes the synthesis of alpha-ribazole-5'-phosphate from nicotinate mononucleotide (NAMN) and 5,6-dimethylbenzimidazole (DMB). The polypeptide is Nicotinate-nucleotide--dimethylbenzimidazole phosphoribosyltransferase (Nitratidesulfovibrio vulgaris (strain ATCC 29579 / DSM 644 / CCUG 34227 / NCIMB 8303 / VKM B-1760 / Hildenborough) (Desulfovibrio vulgaris)).